Consider the following 384-residue polypeptide: MDDNPTAVKLDQGGNQAPQGQGRRRLPKALGYITGDMKEFANWLKDKPQALQFVDWVLRGISQVVFVSNPISGILILVGLLVQNPWCALNGCVGTVVSTLTALLLNQDRSAITAGLQGYNATLVGILMAIYSDKGNYFWWLLFPVSAMSMTCPIFSSALNSVLSKWDLPVFTLPFNMALSMYLSATGHYNPFFPSTLVTPVTSVPNVTWPDLSALQLLKSLPVGVGQIYGCDNPWAGGIFLGAILLSSPLMCLHAAIGSLLGIIAGLSLSAPFENIYAGLWGFNSSLACIAIGGMFMALTWQTHLLALACALFTAYLGASMSHVMAVVGLPSCTWPFCLATLLFLLLTTKNPNIYKMPISKVTYPEENRIFYLQSTKRTVQGPL.

Positions 1-23 are disordered; the sequence is MDDNPTAVKLDQGGNQAPQGQGR. 5 helical membrane passes run 61–81, 85–105, 111–131, 138–158, and 168–188; these read ISQVVFVSNPISGILILVGLL, PWCALNGCVGTVVSTLTALLL, AITAGLQGYNATLVGILMAIY, FWWLLFPVSAMSMTCPIFSSA, and LPVFTLPFNMALSMYLSATGH. Residue Asn206 is glycosylated (N-linked (GlcNAc...) asparagine). The next 3 membrane-spanning stretches (helical) occupy residues 237 to 257, 279 to 299, and 327 to 347; these read GGIFLGAILLSSPLMCLHAAI, GLWGFNSSLACIAIGGMFMAL, and VVGLPSCTWPFCLATLLFLLL.

Belongs to the urea transporter family. Homotrimer; each subunit contains a pore through which urea permeates. Identified in a complex with STOM.

It is found in the cell membrane. The protein resides in the basolateral cell membrane. It catalyses the reaction urea(in) = urea(out). Its function is as follows. Mediates the transport of urea driven by a concentration gradient across the cell membranes of erythrocytes and the renal inner medullary collecting duct which is critical to the urinary concentrating mechanism. Facilitates water transport in erythrocytes. The polypeptide is Urea transporter 1 (SLC14A1) (Capra hircus (Goat)).